Reading from the N-terminus, the 538-residue chain is Solute carrier family 2, facilitated glucose transporter member 9 (538 aa).

The Cytoplasmic segment spans residues Met-1–Ser-34. Ser-3 carries the phosphoserine modification. A helical transmembrane segment spans residues Phe-35–Tyr-54. 2 N-linked (GlcNAc...) asparagine glycosylation sites follow: Asn-55 and Asn-71. The Extracellular segment spans residues Asn-55 to Thr-88. Residues Leu-89–Val-109 traverse the membrane as a helical segment. At Lys-110–Ser-120 the chain is on the cytoplasmic side. Residues Thr-121–Gly-143 traverse the membrane as a helical segment. Over Thr-144 to Leu-148 the chain is Extracellular. A helical transmembrane segment spans residues Ile-149–Leu-170. Residues Asn-171 to Ser-181 are Cytoplasmic-facing. A helical transmembrane segment spans residues Leu-182–Leu-200. The Extracellular segment spans residues Gly-201–Thr-211. Residues Trp-212–Leu-233 traverse the membrane as a helical segment. Residues Pro-234–Gln-297 are Cytoplasmic-facing. The helical transmembrane segment at Val-298–Tyr-319 threads the bilayer. The Extracellular segment spans residues Thr-320–Lys-333. The helical transmembrane segment at Ile-334–Ile-356 threads the bilayer. The Cytoplasmic portion of the chain corresponds to Glu-357–Arg-362. Residues Pro-363 to Leu-385 form a helical membrane-spanning segment. Residues Gln-386–Pro-390 are Extracellular-facing. The chain crosses the membrane as a helical span at residues Trp-391–Leu-418. Over Thr-419 to Pro-429 the chain is Cytoplasmic. Residues Ala-430–Ile-453 traverse the membrane as a helical segment. At Gln-454–Asp-458 the chain is on the extracellular side. The helical transmembrane segment at Ser-459–Leu-480 threads the bilayer. At Pro-481–Val-538 the chain is on the cytoplasmic side. The tract at residues Phe-495–Val-538 is disordered. Over residues Asn-518–Val-538 the composition is skewed to polar residues.

The protein belongs to the major facilitator superfamily. Sugar transporter (TC 2.A.1.1) family. Post-translationally, N-glycosylated. Highly expressed in the intestine, with high expression in the jejunum and ileum, the segments of the intestine that perform the majority of urate excretion. Isoform 1: Widely expressed. Isoform 1: In kidney, expressed at low levels in proximal tubules. Isoform 2: Primarily expressed in liver and kidney; with specific expression in distal convoluted and connecting tubules of kidney.

The protein localises to the basolateral cell membrane. It localises to the apical cell membrane. It carries out the reaction urate(out) = urate(in). In terms of biological role, high-capacity urate transporter, which may play a role in the urate reabsorption by proximal tubules. May have a residual high-affinity, low-capacity glucose and fructose transporter activity. Transports urate at rates 45- to 60-fold faster than glucose. Does not transport galactose. May mediate small uptake of adenine but not of other nucleobases. The chain is Solute carrier family 2, facilitated glucose transporter member 9 from Mus musculus (Mouse).